The sequence spans 248 residues: Pyridoxine 5'-phosphate synthase (248 aa).

Asn-12 lines the 3-amino-2-oxopropyl phosphate pocket. 14-15 (DH) lines the 1-deoxy-D-xylulose 5-phosphate pocket. Arg-23 is a 3-amino-2-oxopropyl phosphate binding site. The active-site Proton acceptor is His-48. 1-deoxy-D-xylulose 5-phosphate contacts are provided by Arg-50 and His-55. Glu-75 acts as the Proton acceptor in catalysis. Thr-105 serves as a coordination point for 1-deoxy-D-xylulose 5-phosphate. Residue His-196 is the Proton donor of the active site. 3-amino-2-oxopropyl phosphate-binding positions include Gly-197 and 218–219 (GH).

It belongs to the PNP synthase family. Homooctamer; tetramer of dimers.

The protein localises to the cytoplasm. It carries out the reaction 3-amino-2-oxopropyl phosphate + 1-deoxy-D-xylulose 5-phosphate = pyridoxine 5'-phosphate + phosphate + 2 H2O + H(+). It participates in cofactor biosynthesis; pyridoxine 5'-phosphate biosynthesis; pyridoxine 5'-phosphate from D-erythrose 4-phosphate: step 5/5. Its function is as follows. Catalyzes the complicated ring closure reaction between the two acyclic compounds 1-deoxy-D-xylulose-5-phosphate (DXP) and 3-amino-2-oxopropyl phosphate (1-amino-acetone-3-phosphate or AAP) to form pyridoxine 5'-phosphate (PNP) and inorganic phosphate. This chain is Pyridoxine 5'-phosphate synthase, found in Pseudomonas fluorescens (strain ATCC BAA-477 / NRRL B-23932 / Pf-5).